The sequence spans 299 residues: Glycine--tRNA ligase alpha subunit (299 aa).

It belongs to the class-II aminoacyl-tRNA synthetase family. As to quaternary structure, tetramer of two alpha and two beta subunits.

Its subcellular location is the cytoplasm. The catalysed reaction is tRNA(Gly) + glycine + ATP = glycyl-tRNA(Gly) + AMP + diphosphate. The protein is Glycine--tRNA ligase alpha subunit (glyQ) of Synechocystis sp. (strain ATCC 27184 / PCC 6803 / Kazusa).